The chain runs to 190 residues: Elongation factor P-like protein (190 aa).

It belongs to the elongation factor P family.

The polypeptide is Elongation factor P-like protein (Shigella boydii serotype 4 (strain Sb227)).